The primary structure comprises 132 residues: MSAATDEILEKLKSLTLLEAAELVKQIEETFGVSAAAPVGGMMVAAPVAGAAAAPAEEVEEKTAFDVILEEVPADKKIAVLKVVRSLTGLGLKEAKEVVESTPKPVKEGASKEDAEAAKKELEEAGAKVSIK.

A compositionally biased stretch (basic and acidic residues) spans 100 to 126; that stretch reads ESTPKPVKEGASKEDAEAAKKELEEAG. Residues 100–132 are disordered; sequence ESTPKPVKEGASKEDAEAAKKELEEAGAKVSIK.

Belongs to the bacterial ribosomal protein bL12 family. Homodimer. Part of the ribosomal stalk of the 50S ribosomal subunit. Forms a multimeric L10(L12)X complex, where L10 forms an elongated spine to which 2 to 4 L12 dimers bind in a sequential fashion. Binds GTP-bound translation factors.

In terms of biological role, forms part of the ribosomal stalk which helps the ribosome interact with GTP-bound translation factors. Is thus essential for accurate translation. The protein is Large ribosomal subunit protein bL12 of Thermosynechococcus vestitus (strain NIES-2133 / IAM M-273 / BP-1).